The chain runs to 336 residues: Large ribosomal subunit protein uL3 (336 aa).

Disordered regions lie at residues 1-43 (MPQP…QGFA), 205-230 (ITKGKGTQGPVKRWGVQKRKGKHARQ), and 311-336 (RPAVRPGDQPRLDPEVRYVSTASNQG). The segment covering 219–230 (GVQKRKGKHARQ) has biased composition (basic residues).

This sequence belongs to the universal ribosomal protein uL3 family. Part of the 50S ribosomal subunit. Forms a cluster with proteins L14 and L24e.

One of the primary rRNA binding proteins, it binds directly near the 3'-end of the 23S rRNA, where it nucleates assembly of the 50S subunit. In Natronomonas pharaonis (strain ATCC 35678 / DSM 2160 / CIP 103997 / JCM 8858 / NBRC 14720 / NCIMB 2260 / Gabara) (Halobacterium pharaonis), this protein is Large ribosomal subunit protein uL3.